A 665-amino-acid chain; its full sequence is FAD-dependent oxidoreductase domain-containing protein 2 (665 aa).

The N-terminal stretch at 1–17 (MGPSGLLVALALHLAVC) is a signal peptide. A glycan (N-linked (GlcNAc...) asparagine) is linked at Asn-136. Residues 642–665 (RWLGDHSTAPEPLTQSLDSNKEEL) are disordered. The Prevents secretion from ER motif lies at 662–665 (KEEL).

It belongs to the FOXRED2 family. In terms of assembly, interacts with SEL1L. May interact with OS9 and DNAJC10. Interacts with TXNDC16. FAD is required as a cofactor. Post-translationally, N-glycosylated.

The protein resides in the endoplasmic reticulum lumen. In terms of biological role, probable flavoprotein which may function in endoplasmic reticulum associated degradation (ERAD). May bind non-native proteins in the endoplasmic reticulum and target them to the ubiquitination machinery for subsequent degradation. This is FAD-dependent oxidoreductase domain-containing protein 2 from Mus musculus (Mouse).